The sequence spans 310 residues: NAD kinase 1 (310 aa).

Asp68 functions as the Proton acceptor in the catalytic mechanism. NAD(+) contacts are provided by residues Asp68–Gly69, Asn145–Glu146, Arg156, His175, and Asp177.

This sequence belongs to the NAD kinase family. A divalent metal cation is required as a cofactor.

It is found in the cytoplasm. The catalysed reaction is NAD(+) + ATP = ADP + NADP(+) + H(+). In terms of biological role, involved in the regulation of the intracellular balance of NAD and NADP, and is a key enzyme in the biosynthesis of NADP. Catalyzes specifically the phosphorylation on 2'-hydroxyl of the adenosine moiety of NAD to yield NADP. The polypeptide is NAD kinase 1 (Gloeobacter violaceus (strain ATCC 29082 / PCC 7421)).